The following is a 435-amino-acid chain: Protein GOLM2 (435 aa).

At methionine 1 the chain carries N-acetylmethionine. The Cytoplasmic segment spans residues 1-14 (MVGFGANRRAGRLP). The helical; Signal-anchor for type II membrane protein transmembrane segment at 15–35 (SFVLVVLLVVIVVLAFNYWSI) threads the bilayer. Residues 35-194 (ISSRHVLLQE…DQFLQEQKET (160 aa)) adopt a coiled-coil conformation. Residues 36–435 (SSRHVLLQEE…YGKQRFSDVL (400 aa)) lie on the Lumenal side of the membrane. 2 stretches are compositionally biased toward basic and acidic residues: residues 191–212 (QKET…DHGA) and 223–239 (DANK…PHGK). 2 disordered regions span residues 191 to 239 (QKET…PHGK) and 271 to 435 (PPVL…SDVL). The residue at position 232 (serine 232) is a Phosphoserine. 2 stretches are compositionally biased toward polar residues: residues 282–294 (QTIS…QPLS) and 302–320 (HLNQ…SNPL). Basic and acidic residues predominate over residues 343-361 (ATRDRANDFHKLKQSRFFD). Serine 365 is modified (phosphoserine). The segment covering 398 to 417 (YNEEEDGDGGEEDVQDDEER) has biased composition (acidic residues). A compositionally biased stretch (basic and acidic residues) spans 425–435 (DYGKQRFSDVL).

It belongs to the GOLM family.

The protein localises to the membrane. This is Protein GOLM2 from Mus musculus (Mouse).